A 2850-amino-acid chain; its full sequence is MPKLLQGVITVIDVFYQYATQHGEYDTLNKAELKELLENEFHQILKNPNDPDTVDIILQSLDRDHNKKVDFTEYLLMIFKLVQARNKIIGKDYCQVSGSKLRDDTHQHQEEQEETEKEENKRQESSFSHSSWSAGENDSYSRNVRGSLKPGTESISRRLSFQRDFSGQHNSYSGQSSSYGEQNSDSHQSSGRGQCGSGSGQSPNYGQHGSGSGQSSSNDTHGSGSGQSSGFSQHKSSSGQSSGYSQHGSGSGHSSGYGQHGSRSGQSSRGERHRSSSGSSSSYGQHGSGSRQSLGHGRQGSGSRQSPSHVRHGSGSGHSSSHGQHGSGSSYSYSRGHYESGSGQTSGFGQHESGSGQSSGYSKHGSGSGHSSSQGQHGSTSGQASSSGQHGSSSRQSSSYGQHESASRHSSGRGQHSSGSGQSPGHGQRGSGSGQSPSSGQHGTGFGRSSSSGPYVSGSGYSSGFGHHESSSEHSSGYTQHGSGSGHSSGHGQHGSRSGQSSRGERQGSSAGSSSSYGQHGSGSRQSLGHSRHGSGSGQSPSPSRGRHESGSRQSSSYGPHGYGSGRSSSRGPYESGSGHSSGLGHQESRSGQSSGYGQHGSSSGHSSTHGQHGSTSGQSSSCGQHGATSGQSSSHGQHGSGSSQSSRYGQQGSGSGQSPSRGRHGSDFGHSSSYGQHGSGSGWSSSNGPHGSVSGQSSGFGHKSGSGQSSGYSQHGSGSSHSSGYRKHGSRSGQSSRSEQHGSSSGLSSSYGQHGSGSHQSSGHGRQGSGSGHSPSRVRHGSSSGHSSSHGQHGSGTSCSSSCGHYESGSGQASGFGQHESGSGQGYSQHGSASGHFSSQGRHGSTSGQSSSSGQHDSSSGQSSSYGQHESASHHASGRGRHGSGSGQSPGHGQRGSGSGQSPSYGRHGSGSGRSSSSGRHGSGSGQSSGFGHKSSSGQSSGYTQHGSGSGHSSSYEQHGSRSGQSSRSEQHGSSSGSSSSYGQHGSGSRQSLGHGQHGSGSGQSPSPSRGRHGSGSGQSSSYGPYRSGSGWSSSRGPYESGSGHSSGLGHRESRSGQSSGYGQHGSSSGHSSTHGQHGSTSGQSSSCGQHGASSGQSSSHGQHGSGSSQSSGYGRQGSGSGQSPGHGQRGSGSRQSPSYGRHGSGSGRSSSSGQHGSGLGESSGFGHHESSSGQSSSYSQHGSGSGHSSGYGQHGSRSGQSSRGERHGSSSGSSSHYGQHGSGSRQSSGHGRQGSGSGHSPSRGRHGSGLGHSSSHGQHGSGSGRSSSRGPYESRSGHSSVFGQHESGSGHSSAYSQHGSGSGHFCSQGQHGSTSGQSSTFDQEGSSTGQSSSYGHRGSGSSQSSGYGRHGAGSGQSPSRGRHGSGSGHSSSYGQHGSGSGWSSSSGRHGSGSGQSSGFGHHESSSWQSSGCTQHGSGSGHSSSYEQHGSRSGQSSRGERHGSSSGSSSSYGQHGSGSRQSLGHGQHGSGSGQSPSPSRGRHGSGSGQSSSYSPYGSGSGWSSSRGPYESGSSHSSGLGHRESRSGQSSGYGQHGSSSGHSSTHGQHGSTSGQSSSCGQHGASSGQSSSHGQHGSGSSQSSGYGRQGSGSGQSPGHGQRGSGSRQSPSYGRHGSGSGRSSSSGQHGSGLGESSGFGHHESSSGQSSSYSQHGSGSGHSSGYGQHGSRSGQSSRGERHGSSSRSSSRYGQHGSGSRQSSGHGRQGSGSGQSPSRGRHGSGLGHSSSHGQHGSGSGRSSSRGPYESRSGHSSVFGQHESGSGHSSAYSQHGSGSGHFCSQGQHGSTSGQSSTFDQEGSSTGQSSSHGQHGSGSSQSSSYGQQGSGSGQSPSRGRHGSGSGHSSSYGQHGSGSGWSSSSGRHGSGSGQSSGFGHHESSSWQSSGYTQHGSGSGHSSSYEQHGSRSGQSSRGEQHGSSSGSSSSYGQHGSGSRQSLGHGQHGSGSGQSPSPSRGRHGSGSGQSSSYGPYGSGSGWSSSRGPYESGSGHSSGLGHRESRSGQSSGYGQHGSSSGHSSTHGQHGSASGQSSSCGQHGASSGQSSSHGQHGSGSSQSSGYGRQGSGSGQSPGHGQRGSGSRQSPSYGRHGSGSGRSSSSGQHGPGLGESSGFGHHESSSGQSSSYSQHGSGSGHSSGYGQHGSRSGQSSRGERHGSSSGSSSRYGQHGSGSRQSSGHGRQGSGSGHSPSRGRHGSGSGHSSSHGQHGSGSGRSSSRGPYESRSGHSSVFGQHESGSGHSSAYSQHGSGSGHFCSQGQHGSTSGQSSTFDQEGSSTGQSSSHGQHGSGSSQSSSYGQQGSGSGQSPSRGRHGSGSGHSSSYGQHGSGSGWSSSSGRHGSGSGQSSGFGHHESSSWQSSGYTQHGSGSGHSSSYEQHGSRSGQSSRGERHGSSSGSSSSYGQHGSGSRQSLGHGQHGSGSGQSPSPSRGRHGSGSGQSSSYSPYGSGSGWSSSRGPYESGSGHSSGLGHRESRSGQSSGYGQHGSSSGHSSTHGQHGSTSGQSSSCGQHGASSGQSSSHGQHGSGSSQSSGYGRQGSGSGQSPGHGQRGSGSRQSPSYGRHGSGSGRSSSSGQHGSGLGESSGFGHHESSSGQSSSYSQHGSGSGHSSGYGQHGSRSGQSSRGERHGSSSGSSSHYGQHGSGSRQSSGHGRQGSGSGQSPSRGRHGSGLGHSSSHGQHGSGSGRSSSRGPYESRLGHSSVFGQHESGSGHSSAYSQHGSGSGHFCSQGQHGSTSGQSSTFDQEGSSTGQSSSYGHRGSGSSQSSGYGRHGAGSGQSLSHGRHGSGSGQSSSYGQHGSGSGQSSGYSQHGSGSGQDGYSYCKGGSNHDGGSSGSYFLSFPSSTSPYEYVQEQRCYFYQ.

Residues 1–81 (MPKLLQGVIT…TEYLLMIFKL (81 aa)) are S-100-like. 2 EF-hand domains span residues 13-48 (DVFY…LKNP) and 49-84 (NDPD…LVQA). The Ca(2+) site is built by Thr27, Glu32, Asp62, Asp64, Asn66, Lys68, and Glu73. 13 consecutive repeat copies span residues 97–187 (SGSK…SDSH), 188–278 (QSSG…SSSG), 279–369 (SSSS…SGSG), 370–460 (HSSS…SGSG), 474–566 (HSSG…YGSG), 593–683 (QSSG…SGSG), 685–747 (SSSN…SSSG), 748–836 (LSSS…SASG), 839–875 (SSQG…SASH), 876–965 (HASG…SRSG), 966–1004 (QSSR…SGSG), 1007–1097 (PSPS…ASSG), and 1098–1188 (QSSS…SGSG). Residues 100–110 (KLRDDTHQHQE) are compositionally biased toward basic and acidic residues. Disordered stretches follow at residues 100–154 (KLRD…GTES) and 166–2817 (SGQH…KGGS). A compositionally biased stretch (polar residues) spans 125 to 144 (SSFSHSSWSAGENDSYSRNV). Low complexity-rich tracts occupy residues 167 to 192 (GQHN…SSGR) and 226 to 248 (GQSS…SQHG). Positions 249–259 (SGSGHSSGYGQ) are enriched in gly residues. Composition is skewed to low complexity over residues 276-308 (SSGS…QSPS) and 317-421 (GHSS…SGSG). Positions 422–433 (QSPGHGQRGSGS) are enriched in gly residues. Low complexity-rich tracts occupy residues 449-465 (SSSS…SSGF) and 473-482 (EHSSGYTQHG). Positions 483–493 (SGSGHSSGHGQ) are enriched in gly residues. Low complexity-rich tracts occupy residues 494–529 (HGSR…QSLG), 555–661 (SSSY…QSPS), 670–724 (GHSS…SHSS), 732–765 (RSGQ…SSGH), 782–806 (GSSS…SCGH), and 818–871 (GQHE…GQHE). A phosphoserine mark is found at Ser659 and Ser661. The span at 884–900 (GSGSGQSPGHGQRGSGS) shows a compositional bias: gly residues. Ser890 is modified (phosphoserine). Composition is skewed to low complexity over residues 901-921 (GQSP…SSGR) and 931-996 (GFGH…SLGH). Residues Ser993 and Ser1008 each carry the phosphoserine modification. 2 stretches are compositionally biased toward low complexity: residues 1019 to 1050 (GQSS…SSGL) and 1057 to 1115 (SGQS…SSGY). Gly residues predominate over residues 1116 to 1132 (GRQGSGSGQSPGHGQRG). 2 stretches are compositionally biased toward low complexity: residues 1133-1156 (SGSR…SSGQ) and 1166-1184 (GFGH…SQHG). Positions 1185–1195 (SGSGHSSGYGQ) are enriched in gly residues. Position 1205 is an omega-N-methylarginine (Arg1205). Low complexity-rich tracts occupy residues 1211 to 1232 (SSSG…SSGH) and 1253 to 1276 (GHSS…PYES). Copy 14 of the repeat occupies 1215–1305 (SSSHYGQHGS…AYSQHGSGSG (91 aa)). Residues 1280–1301 (HSSVFGQHESGSGHSSAYSQHG) show a composition bias toward polar residues. 5 stretches are compositionally biased toward low complexity: residues 1309 to 1322 (SQGQ…QSST), 1331 to 1349 (GQSS…SSGY), 1370 to 1390 (GHSS…SSGR), 1400 to 1438 (GFGH…GQSS), and 1445 to 1466 (SSSG…SLGH). A run of 16 repeats spans residues 1332-1422 (QSSS…SGSG), 1423-1474 (HSSS…SGSG), 1477-1567 (PSPS…ASSG), 1568-1658 (QSSS…SGSG), 1685-1775 (SSSR…SGSG), 1802-1892 (QSSS…SGSG), 1893-1944 (HSSS…SGSG), 1947-2037 (PSPS…ASSG), 2038-2128 (QSSS…SGSG), 2155-2245 (SSSR…SGSG), 2272-2362 (QSSS…SGSG), 2363-2414 (HSSS…SGSG), 2417-2507 (PSPS…ASSG), 2508-2598 (QSSS…SGSG), 2625-2715 (SSSH…SGSG), and 2716-2806 (HFCS…SGSG). Phosphoserine is present on residues Ser1463 and Ser1478. Low complexity-rich tracts occupy residues 1489–1520 (GQSS…SSGL) and 1527–1585 (SGQS…SSGY). A compositionally biased stretch (gly residues) spans 1586 to 1602 (GRQGSGSGQSPGHGQRG). Low complexity-rich tracts occupy residues 1603–1626 (SGSR…SSGQ) and 1636–1654 (GFGH…SQHG). Positions 1655–1665 (SGSGHSSGYGQ) are enriched in gly residues. The span at 1682–1702 (SSRSSSRYGQHGSGSRQSSGH) shows a compositional bias: low complexity. Residues Ser1712 and Ser1714 each carry the phosphoserine modification. Positions 1723-1746 (GHSSSHGQHGSGSGRSSSRGPYES) are enriched in low complexity. Positions 1750 to 1771 (HSSVFGQHESGSGHSSAYSQHG) are enriched in polar residues. Composition is skewed to low complexity over residues 1779-1831 (SQGQ…QSPS), 1840-1860 (GHSS…SSGR), and 1870-1936 (GFGH…SLGH). 2 positions are modified to phosphoserine: Ser1829 and Ser1831. Phosphoserine occurs at positions 1933 and 1948. Composition is skewed to low complexity over residues 1959-1990 (GQSS…SSGL) and 1997-2055 (SGQS…SSGY). Residues 2056–2072 (GRQGSGSGQSPGHGQRG) show a composition bias toward gly residues. Composition is skewed to low complexity over residues 2073-2096 (SGSR…SSGQ) and 2106-2124 (GFGH…SQHG). Gly residues predominate over residues 2125-2135 (SGSGHSSGYGQ). Composition is skewed to low complexity over residues 2151 to 2172 (SSSG…SSGH) and 2193 to 2216 (GHSS…PYES). Residues 2220–2241 (HSSVFGQHESGSGHSSAYSQHG) are compositionally biased toward polar residues. Composition is skewed to low complexity over residues 2249 to 2301 (SQGQ…QSPS), 2310 to 2330 (GHSS…SSGR), 2340 to 2378 (GFGH…GQSS), and 2385 to 2406 (SSSG…SLGH). A phosphoserine mark is found at Ser2299 and Ser2301. A phosphoserine mark is found at Ser2403 and Ser2418. 2 stretches are compositionally biased toward low complexity: residues 2429–2460 (GQSS…SSGL) and 2467–2525 (SGQS…SSGY). Residues 2526–2542 (GRQGSGSGQSPGHGQRG) are compositionally biased toward gly residues. Low complexity-rich tracts occupy residues 2543–2566 (SGSR…SSGQ) and 2576–2594 (GFGH…SQHG). The segment covering 2595-2605 (SGSGHSSGYGQ) has biased composition (gly residues). Residues 2621-2642 (SSSGSSSHYGQHGSGSRQSSGH) show a composition bias toward low complexity. Residues Ser2652 and Ser2654 each carry the phosphoserine modification. Low complexity predominate over residues 2663–2682 (GHSSSHGQHGSGSGRSSSRG). Over residues 2698 to 2711 (ESGSGHSSAYSQHG) the composition is skewed to polar residues. Low complexity-rich tracts occupy residues 2719–2732 (SQGQ…QSST), 2741–2759 (GQSS…SSGY), and 2795–2816 (SSGY…CKGG).

Belongs to the S100-fused protein family. It in the N-terminal section; belongs to the S-100 family. In terms of processing, processed during the process of epidermal differentiation. Post-translationally, forms covalent cross-links mediated by transglutaminase TGM3, between glutamine and the epsilon-amino group of lysine residues (in vitro). Expressed in cornified epidermis, psoriatic and regenerating skin after wounding. Found in the upper granular layer and in the entire cornified layer of epidermis.

The protein resides in the cytoplasmic granule. In terms of biological role, component of the epidermal cornified cell envelopes. The protein is Hornerin (HRNR) of Homo sapiens (Human).